The following is a 301-amino-acid chain: uncharacterized protein (301 aa).

This is an uncharacterized protein from Sinorhizobium fredii (strain NBRC 101917 / NGR234).